The following is a 361-amino-acid chain: Phosphoserine aminotransferase (361 aa).

Residue Arg-42 participates in L-glutamate binding. Pyridoxal 5'-phosphate contacts are provided by residues 76–77 (AR), Trp-102, Thr-153, Asp-173, and Gln-196. An N6-(pyridoxal phosphate)lysine modification is found at Lys-197. Pyridoxal 5'-phosphate is bound at residue 238–239 (NT).

It belongs to the class-V pyridoxal-phosphate-dependent aminotransferase family. SerC subfamily. As to quaternary structure, homodimer. The cofactor is pyridoxal 5'-phosphate.

It is found in the cytoplasm. The catalysed reaction is O-phospho-L-serine + 2-oxoglutarate = 3-phosphooxypyruvate + L-glutamate. The enzyme catalyses 4-(phosphooxy)-L-threonine + 2-oxoglutarate = (R)-3-hydroxy-2-oxo-4-phosphooxybutanoate + L-glutamate. The protein operates within amino-acid biosynthesis; L-serine biosynthesis; L-serine from 3-phospho-D-glycerate: step 2/3. It functions in the pathway cofactor biosynthesis; pyridoxine 5'-phosphate biosynthesis; pyridoxine 5'-phosphate from D-erythrose 4-phosphate: step 3/5. Its function is as follows. Catalyzes the reversible conversion of 3-phosphohydroxypyruvate to phosphoserine and of 3-hydroxy-2-oxo-4-phosphonooxybutanoate to phosphohydroxythreonine. This chain is Phosphoserine aminotransferase, found in Pectobacterium carotovorum subsp. carotovorum (strain PC1).